The sequence spans 508 residues: Cobyric acid synthase (508 aa).

One can recognise a GATase cobBQ-type domain in the interval 266–464 (SLRIAVVAYP…AHGLFESTEV (199 aa)). Residue cysteine 347 is the Nucleophile of the active site. Residue histidine 456 is part of the active site.

Belongs to the CobB/CobQ family. CobQ subfamily.

It participates in cofactor biosynthesis; adenosylcobalamin biosynthesis. In terms of biological role, catalyzes amidations at positions B, D, E, and G on adenosylcobyrinic A,C-diamide. NH(2) groups are provided by glutamine, and one molecule of ATP is hydrogenolyzed for each amidation. In Methylibium petroleiphilum (strain ATCC BAA-1232 / LMG 22953 / PM1), this protein is Cobyric acid synthase.